Reading from the N-terminus, the 344-residue chain is Tetraacyldisaccharide 4'-kinase (344 aa).

Residue 65-72 coordinates ATP; the sequence is HAGGTGKT.

This sequence belongs to the LpxK family.

The enzyme catalyses a lipid A disaccharide + ATP = a lipid IVA + ADP + H(+). It functions in the pathway glycolipid biosynthesis; lipid IV(A) biosynthesis; lipid IV(A) from (3R)-3-hydroxytetradecanoyl-[acyl-carrier-protein] and UDP-N-acetyl-alpha-D-glucosamine: step 6/6. Its function is as follows. Transfers the gamma-phosphate of ATP to the 4'-position of a tetraacyldisaccharide 1-phosphate intermediate (termed DS-1-P) to form tetraacyldisaccharide 1,4'-bis-phosphate (lipid IVA). This Neisseria meningitidis serogroup C / serotype 2a (strain ATCC 700532 / DSM 15464 / FAM18) protein is Tetraacyldisaccharide 4'-kinase.